A 181-amino-acid polypeptide reads, in one-letter code: MAAGEEAPSILLPAVYDIVWSAVVFVVLLVVIWKYALPRVYAMLDGRTEAIAGGIEKAERAQAEADAAKAELTAQLVEARAEAGRIREQARVDASVIAAEIKEQATADAARITASGTQQIEAERQQAVVSLRSEVGSLAIDLASGVIGQSLADDQRSTALVDRFLADLEASETAGRTGSAS.

A helical membrane pass occupies residues 12-32 (LPAVYDIVWSAVVFVVLLVVI).

The protein belongs to the ATPase B chain family. In terms of assembly, F-type ATPases have 2 components, F(1) - the catalytic core - and F(0) - the membrane proton channel. F(1) has five subunits: alpha(3), beta(3), gamma(1), delta(1), epsilon(1). F(0) has three main subunits: a(1), b(2) and c(10-14). The alpha and beta chains form an alternating ring which encloses part of the gamma chain. F(1) is attached to F(0) by a central stalk formed by the gamma and epsilon chains, while a peripheral stalk is formed by the delta and b chains.

Its subcellular location is the cell membrane. F(1)F(0) ATP synthase produces ATP from ADP in the presence of a proton or sodium gradient. F-type ATPases consist of two structural domains, F(1) containing the extramembraneous catalytic core and F(0) containing the membrane proton channel, linked together by a central stalk and a peripheral stalk. During catalysis, ATP synthesis in the catalytic domain of F(1) is coupled via a rotary mechanism of the central stalk subunits to proton translocation. Its function is as follows. Component of the F(0) channel, it forms part of the peripheral stalk, linking F(1) to F(0). This chain is ATP synthase subunit b, found in Clavibacter sepedonicus (Clavibacter michiganensis subsp. sepedonicus).